We begin with the raw amino-acid sequence, 160 residues long: Cyanate hydratase (160 aa).

Residues arginine 100, glutamate 103, and serine 126 contribute to the active site.

The protein belongs to the cyanase family.

The enzyme catalyses cyanate + hydrogencarbonate + 3 H(+) = NH4(+) + 2 CO2. Functionally, catalyzes the reaction of cyanate with bicarbonate to produce ammonia and carbon dioxide. The protein is Cyanate hydratase of Emericella nidulans (strain FGSC A4 / ATCC 38163 / CBS 112.46 / NRRL 194 / M139) (Aspergillus nidulans).